We begin with the raw amino-acid sequence, 132 residues long: Fertilization-influencing membrane protein (132 aa).

Residues 100 to 120 (PGLFHHILVGLLVVAFFFLLF) form a helical membrane-spanning segment.

Testis-specific.

It localises to the cell membrane. May play a role in sperm-oocyte fusion during fertilization. The polypeptide is Fertilization-influencing membrane protein (Homo sapiens (Human)).